Here is a 176-residue protein sequence, read N- to C-terminus: Large ribosomal subunit protein bL17m (176 aa).

The transit peptide at methionine 1–alanine 8 directs the protein to the mitochondrion.

It belongs to the bacterial ribosomal protein bL17 family. Component of the mitochondrial ribosome large subunit (39S) which comprises a 16S rRNA and about 50 distinct proteins.

It localises to the mitochondrion. The sequence is that of Large ribosomal subunit protein bL17m (Mrpl17) from Mus musculus (Mouse).